We begin with the raw amino-acid sequence, 140 residues long: GTP-dependent dephospho-CoA kinase (140 aa).

GTP-binding residues include D21, V22, V23, D40, K42, and E92.

Belongs to the GTP-dependent DPCK family.

It catalyses the reaction 3'-dephospho-CoA + GTP = GDP + CoA + H(+). The protein operates within cofactor biosynthesis; coenzyme A biosynthesis. Its function is as follows. Catalyzes the GTP-dependent phosphorylation of the 3'-hydroxyl group of dephosphocoenzyme A to form coenzyme A (CoA). In Pyrobaculum aerophilum (strain ATCC 51768 / DSM 7523 / JCM 9630 / CIP 104966 / NBRC 100827 / IM2), this protein is GTP-dependent dephospho-CoA kinase.